Here is a 347-residue protein sequence, read N- to C-terminus: NADH-quinone oxidoreductase subunit H (347 aa).

Helical transmembrane passes span V21 to A41, G87 to I107, I118 to L138, A157 to A177, G195 to I215, N258 to I278, L283 to F303, and W323 to L343.

This sequence belongs to the complex I subunit 1 family. As to quaternary structure, NDH-1 is composed of 14 different subunits. Subunits NuoA, H, J, K, L, M, N constitute the membrane sector of the complex.

The protein resides in the cell inner membrane. It carries out the reaction a quinone + NADH + 5 H(+)(in) = a quinol + NAD(+) + 4 H(+)(out). Functionally, NDH-1 shuttles electrons from NADH, via FMN and iron-sulfur (Fe-S) centers, to quinones in the respiratory chain. The immediate electron acceptor for the enzyme in this species is believed to be ubiquinone. Couples the redox reaction to proton translocation (for every two electrons transferred, four hydrogen ions are translocated across the cytoplasmic membrane), and thus conserves the redox energy in a proton gradient. This subunit may bind ubiquinone. This is NADH-quinone oxidoreductase subunit H from Sphingopyxis alaskensis (strain DSM 13593 / LMG 18877 / RB2256) (Sphingomonas alaskensis).